We begin with the raw amino-acid sequence, 189 residues long: Ribosome hibernation promotion factor (189 aa).

It belongs to the HPF/YfiA ribosome-associated protein family. Long HPF subfamily. In terms of assembly, interacts with 100S ribosomes.

Its subcellular location is the cytoplasm. Functionally, required for dimerization of active 70S ribosomes into 100S ribosomes in stationary phase; 100S ribosomes are translationally inactive and sometimes present during exponential growth. The protein is Ribosome hibernation promotion factor of Staphylococcus epidermidis (strain ATCC 35984 / DSM 28319 / BCRC 17069 / CCUG 31568 / BM 3577 / RP62A).